The sequence spans 303 residues: Putative S-adenosyl-L-methionine-dependent methyltransferase MAV_4435 (303 aa).

S-adenosyl-L-methionine contacts are provided by residues Asp129 and 158–159; that span reads DL.

The protein belongs to the UPF0677 family.

Its function is as follows. Exhibits S-adenosyl-L-methionine-dependent methyltransferase activity. This is Putative S-adenosyl-L-methionine-dependent methyltransferase MAV_4435 from Mycobacterium avium (strain 104).